The chain runs to 140 residues: MATIAQLIRHDRKDKFKKSKSPALMYTYNSLKKKRTYNPSPYKRGVCTRVGTMTPKKPNSALRKYAKVKLTNGYEVLAYIPGEGHNLQEHSVVLIEGGRVKDLPGVRYHIVRGTLDTSGVEKRRQQRSGYGAKRPKEKKE.

2 disordered regions span residues 36 to 56 and 117 to 140; these read TYNP…MTPK and TSGV…EKKE.

It belongs to the universal ribosomal protein uS12 family. Part of the 30S ribosomal subunit. Contacts proteins S8 and S17. May interact with IF1 in the 30S initiation complex.

Its function is as follows. With S4 and S5 plays an important role in translational accuracy. Interacts with and stabilizes bases of the 16S rRNA that are involved in tRNA selection in the A site and with the mRNA backbone. Located at the interface of the 30S and 50S subunits, it traverses the body of the 30S subunit contacting proteins on the other side and probably holding the rRNA structure together. The combined cluster of proteins S8, S12 and S17 appears to hold together the shoulder and platform of the 30S subunit. This Malacoplasma penetrans (strain HF-2) (Mycoplasma penetrans) protein is Small ribosomal subunit protein uS12.